The chain runs to 1773 residues: Disco-interacting protein 2 (1773 aa).

Residues 3–110 enclose the DMAP1-binding domain; it reads HTASLPGYVR…QRHSKKIDFH (108 aa). Tyr60 and Tyr61 each carry phosphotyrosine. 2 disordered regions span residues 112 to 185 and 198 to 319; these read QAAM…YHSE and LKGR…PLSS. 2 stretches are compositionally biased toward polar residues: residues 113 to 125 and 146 to 165; these read AAMS…QSGN and YQNT…NNSQ. A compositionally biased stretch (basic residues) spans 166-175; it reads HRQRRTQRKV. The span at 176-185 shows a compositional bias: basic and acidic residues; it reads THNEKRYHSE. Acidic residues predominate over residues 224–236; it reads DELDSSTDDESIP. Residues 241-253 show a composition bias toward basic and acidic residues; it reads SPDKEYNYPRDHI. Over residues 272 to 297 the composition is skewed to polar residues; that stretch reads SMGSQQHARTDVKQNQITNQKYTAPN.

Belongs to the DIP2 family. In terms of assembly, interacts with Disco. In terms of tissue distribution, expressed in the developing nervous system. Ubiquitously expressed in the developing brain. Within the mushroom body, a higher level is detected in the core of lobes and peduncle in the late third instar larva. Detected in whole mushroom body neuron structures at 48 hours after puparium formation and during later stages.

The protein localises to the cell membrane. Required for precise axonal bifurcation in mushroom body neurons by suppressing ectopic bifurcation and regulating the guidance of sister axons. May function by regulating expression of tdp1. Acts downstream of the serine/threonine-protein kinase Bsk to modulate the direction of axon projection. May play a role in fatty acid metabolism. The protein is Disco-interacting protein 2 of Drosophila melanogaster (Fruit fly).